The primary structure comprises 370 residues: Phospho-2-dehydro-3-deoxyheptonate aldolase, tyrosine-inhibited (370 aa).

Belongs to the class-I DAHP synthase family.

The catalysed reaction is D-erythrose 4-phosphate + phosphoenolpyruvate + H2O = 7-phospho-2-dehydro-3-deoxy-D-arabino-heptonate + phosphate. It functions in the pathway metabolic intermediate biosynthesis; chorismate biosynthesis; chorismate from D-erythrose 4-phosphate and phosphoenolpyruvate: step 1/7. Its activity is regulated as follows. Inhibited by tyrosine. Its function is as follows. Stereospecific condensation of phosphoenolpyruvate (PEP) and D-erythrose-4-phosphate (E4P) giving rise to 3-deoxy-D-arabino-heptulosonate-7-phosphate (DAHP). This is Phospho-2-dehydro-3-deoxyheptonate aldolase, tyrosine-inhibited (ARO4) from Candida albicans (strain SC5314 / ATCC MYA-2876) (Yeast).